Reading from the N-terminus, the 762-residue chain is ATP-dependent RNA helicase SUV3 homolog, mitochondrial (762 aa).

A mitochondrion-targeting transit peptide spans 1–36; sequence MQNTRRCISLICVTRQPPSLRATYGAVAAARCLHRA. In terms of domain architecture, Helicase ATP-binding spans 181–321; that stretch reads NARALTRKIV…ALELLQKICE (141 aa). ATP is bound at residue 194-201; sequence GPTNSGKT. The region spanning 331–508 is the Helicase C-terminal domain; that stretch reads RYDRLTELTV…PTADQIELYA (178 aa). The segment at 716–762 is disordered; it reads EWDAQQVGQAAAASTSSKESQESPPDDSDDEDSYPGSYKKTRRKRRK. A compositionally biased stretch (polar residues) spans 721-730; it reads QVGQAAAAST. Positions 739–748 are enriched in acidic residues; it reads PPDDSDDEDS.

This sequence belongs to the helicase family. It depends on Mg(2+) as a cofactor. Mn(2+) is required as a cofactor.

The protein resides in the mitochondrion. It carries out the reaction ATP + H2O = ADP + phosphate + H(+). In terms of biological role, major helicase player in mitochondrial RNA metabolism and maintenance. Likely component of the mitochondrial degradosome (mtEXO) complex, that degrades 3' overhang double-stranded RNA with a 3'-to-5' directionality in an ATP-dependent manner. ATPase and ATP-dependent multisubstrate helicase, able to unwind double-stranded (ds) DNA and RNA, and RNA/DNA heteroduplexes in the 5'-to-3' direction. Regulates mRNA stability and is required for the correct processing and maturation of mitochondrial transcripts. The polypeptide is ATP-dependent RNA helicase SUV3 homolog, mitochondrial (Drosophila pseudoobscura pseudoobscura (Fruit fly)).